The sequence spans 351 residues: MIEKLFKQNLQKFVPYTVPKLDYEIKLDANESFLKLDDYMMGKILNKIKDVEFNRYPDAGAEKVCRAYSKYVGINRENIMAGNGSDELIQIIIAALVDKNENIMTVEPDFSMYGNYSEIGGGKALIFQLDEEFNLDVDKLIESANVEKVKVLFLSNPNNPTGKVLKREQIFKILNGCDCAVVIDEAYVEFHEESIVDSIYEYENLIVLRTCSKAMASAAIRLGFLITNSFMLNEIKKAKPPFNVSSVTQAIGEAVLEETEYIKKSLENIKNERSFLIDKLSAFKEIKLYPTCANFILIKFKDAEFVYKYLLENKIVVRNYKQGRLKDFLRITVGSREENEAVINNLSKILK.

Residue K213 is modified to N6-(pyridoxal phosphate)lysine.

This sequence belongs to the class-II pyridoxal-phosphate-dependent aminotransferase family. Histidinol-phosphate aminotransferase subfamily. Homodimer. Pyridoxal 5'-phosphate is required as a cofactor.

It carries out the reaction L-histidinol phosphate + 2-oxoglutarate = 3-(imidazol-4-yl)-2-oxopropyl phosphate + L-glutamate. The protein operates within amino-acid biosynthesis; L-histidine biosynthesis; L-histidine from 5-phospho-alpha-D-ribose 1-diphosphate: step 7/9. The sequence is that of Histidinol-phosphate aminotransferase from Clostridium kluyveri (strain NBRC 12016).